The sequence spans 64 residues: Large ribosomal subunit protein bL33c (64 aa).

It belongs to the bacterial ribosomal protein bL33 family.

It is found in the plastid. It localises to the chloroplast. The chain is Large ribosomal subunit protein bL33c (rpl33) from Mesostigma viride (Green alga).